A 111-amino-acid polypeptide reads, in one-letter code: Inner membrane protein YdgC (111 aa).

Residues 1–26 (MGLVIKAALGALVVLLIGVLAKTKNY) are Cytoplasmic-facing. A helical transmembrane segment spans residues 27–47 (YIAGLIPLFPTFALIAHYIVA). The Periplasmic segment spans residues 48–58 (SERGIEALRAT). The helical transmembrane segment at 59 to 79 (IIFSMWSIIPYFVYLVSLWYF) threads the bilayer. Topologically, residues 80-87 (TGMMRLPA) are cytoplasmic. Residues 88 to 108 (AFVGSVACWGISAWVLIICWI) form a helical membrane-spanning segment. Residues 109-111 (KLH) lie on the Periplasmic side of the membrane.

To P.aeruginosa GlpM.

It is found in the cell inner membrane. In Escherichia coli O157:H7, this protein is Inner membrane protein YdgC (ydgC).